The following is a 65-amino-acid chain: 7 kDa A-type inclusion protein (65 aa).

Over residues 1-20 (MSNQNIPQLSEYQTSVSQVA) the composition is skewed to polar residues. Residues 1-32 (MSNQNIPQLSEYQTSVSQVAVTPPPKPKTPQI) form a disordered region.

This Bos taurus (Bovine) protein is 7 kDa A-type inclusion protein.